A 287-amino-acid chain; its full sequence is Large ribosomal subunit protein uL2 (287 aa).

Residues Arg-221 to Ser-287 form a disordered region. Basic residues predominate over residues Lys-258 to Ser-287.

Belongs to the universal ribosomal protein uL2 family. In terms of assembly, part of the 50S ribosomal subunit. Forms a bridge to the 30S subunit in the 70S ribosome.

One of the primary rRNA binding proteins. Required for association of the 30S and 50S subunits to form the 70S ribosome, for tRNA binding and peptide bond formation. It has been suggested to have peptidyltransferase activity; this is somewhat controversial. Makes several contacts with the 16S rRNA in the 70S ribosome. The chain is Large ribosomal subunit protein uL2 from Prochlorococcus marinus (strain AS9601).